The sequence spans 189 residues: Probable transcriptional regulator Rv1176c (189 aa).

This sequence belongs to the PadR family. In terms of assembly, homodimer.

It is found in the cytoplasm. In terms of biological role, probable transcriptional regulator that may help mitigate the effect of oxidative stress and help mycobacteria survive inside macrophages. Binds to its own promoter region. The chain is Probable transcriptional regulator Rv1176c from Mycobacterium tuberculosis (strain ATCC 25618 / H37Rv).